Reading from the N-terminus, the 1203-residue chain is DNA-directed RNA polymerase subunit beta' (1203 aa).

Zn(2+)-binding residues include C60, C62, C75, and C78. D449, D451, and D453 together coordinate Mg(2+). C818, C892, C899, and C902 together coordinate Zn(2+).

The protein belongs to the RNA polymerase beta' chain family. As to quaternary structure, the RNAP catalytic core consists of 2 alpha, 1 beta, 1 beta' and 1 omega subunit. When a sigma factor is associated with the core the holoenzyme is formed, which can initiate transcription. Requires Mg(2+) as cofactor. It depends on Zn(2+) as a cofactor.

It carries out the reaction RNA(n) + a ribonucleoside 5'-triphosphate = RNA(n+1) + diphosphate. Functionally, DNA-dependent RNA polymerase catalyzes the transcription of DNA into RNA using the four ribonucleoside triphosphates as substrates. This Bacillus cereus (strain ZK / E33L) protein is DNA-directed RNA polymerase subunit beta'.